The chain runs to 394 residues: Uroporphyrinogen decarboxylase 2, chloroplastic (394 aa).

Substrate is bound by residues 74–78, F93, S123, D124, Y201, S256, and H371; that span reads RQAGR.

The protein belongs to the uroporphyrinogen decarboxylase family. In terms of assembly, homodimer.

The protein localises to the plastid. It is found in the chloroplast. The catalysed reaction is uroporphyrinogen III + 4 H(+) = coproporphyrinogen III + 4 CO2. The protein operates within porphyrin-containing compound metabolism; protoporphyrin-IX biosynthesis; coproporphyrinogen-III from 5-aminolevulinate: step 4/4. It functions in the pathway porphyrin-containing compound metabolism; chlorophyll biosynthesis. Catalyzes the decarboxylation of four acetate groups of uroporphyrinogen-III to yield coproporphyrinogen-III. This chain is Uroporphyrinogen decarboxylase 2, chloroplastic (HEME2), found in Arabidopsis thaliana (Mouse-ear cress).